The following is a 520-amino-acid chain: GMP synthase [glutamine-hydrolyzing] (520 aa).

Residues 13–205 enclose the Glutamine amidotransferase type-1 domain; that stretch reads KIIVLDYGSQ…ALNICKAKGD (193 aa). Cys-90 (nucleophile) is an active-site residue. Residues His-179 and Glu-181 contribute to the active site. A GMPS ATP-PPase domain is found at 206-395; it reads WSMDNFIDMQ…LGMPDHIVWR (190 aa). 233–239 serves as a coordination point for ATP; sequence SGGVDSS.

In terms of assembly, homodimer.

It catalyses the reaction XMP + L-glutamine + ATP + H2O = GMP + L-glutamate + AMP + diphosphate + 2 H(+). Its pathway is purine metabolism; GMP biosynthesis; GMP from XMP (L-Gln route): step 1/1. In terms of biological role, catalyzes the synthesis of GMP from XMP. The protein is GMP synthase [glutamine-hydrolyzing] of Streptococcus pneumoniae (strain ATCC 700669 / Spain 23F-1).